Reading from the N-terminus, the 370-residue chain is MSHPSPAGKPSNSKNPRVFFDVDIGGERVGRIVLELFADIVPKTAENFRALCTGEKGTGPTTGKPLHFKGCPFHRIIKKFMIQGGDFSNQNGTGGESIYGEKFEDENFHYKHDREGLLSMANAGPNTNGSQFFITTVPTPHLDGKHVVFGQVIKGLGVARMLENVEVNGEKPAKLCVIAECGELKEGDEWGIFPKDGSGDSHPDFPEDADIDLKDVDKILLISEDLKNIGNTFFKSQNWEMAIKKYAKVLRYLDSSKAVIEKADVSRLQPIALSCVLNIGACKLKMSNWQGAIDSCLEALEMDPSNTKALYRKAQGWQGLKEYDQALADLKKAQEIAPGDKAIQAELLKVKQMIKAQKDKEKAVYAKMFA.

Position 5 is a phosphoserine (Ser-5). Residues 19–183 (FFDVDIGGER…KLCVIAECGE (165 aa)) form the PPIase cyclophilin-type domain. Lys-171 is modified (N6-acetyllysine). The segment at 185–215 (KEGDEWGIFPKDGSGDSHPDFPEDADIDLKD) is chaperone activity. Residue Ser-198 is modified to Phosphoserine. The tract at residues 214–370 (KDVDKILLIS…EKAVYAKMFA (157 aa)) is interaction with HSP90AB1. TPR repeat units follow at residues 223 to 256 (SEDL…LDSS), 273 to 306 (LSCV…DPSN), and 308 to 340 (KALY…APGD).

Belongs to the cyclophilin-type PPIase family. PPIase D subfamily. Identified in ESR1 or NR3C1/GCR steroid receptor-chaperone complexes. Found in HSP90 chaperone complexes with kinase clients LCK or EIF2AK1. Two monomers associate with one HSP90 homodimer. Interacts with HSP90AA1. Interacts with HSP90AB1; PPID and FKBP4 compete for binding to HSP90AB1 and the interaction is mutually exclusive with the PPID:HSPA8 interaction. Interacts with HSPA8; PPID and STIP1 but not FKBP4 compete for binding to HSPA8 and the interaction is mutually exclusive with the PPID:HSP90AB1 interaction. Interacts with S100A1 and S100A2; the interactions dissociate the PPID:HSP90AA1 interaction. Interacts with S100A6. Interacts with MYB, ILF2, XRCC6, RACK1 and RPS3. Interacts with cytoplasmic dynein 1 intermediate chain (DYNC1I1 or DYNC1I2).

It localises to the cytoplasm. The protein resides in the nucleus. Its subcellular location is the nucleolus. The protein localises to the nucleoplasm. The catalysed reaction is [protein]-peptidylproline (omega=180) = [protein]-peptidylproline (omega=0). Less sensitive to inhibition by cyclosporin A than is CYP-18. Functionally, PPIase that catalyzes the cis-trans isomerization of proline imidic peptide bonds in oligopeptides and may therefore assist protein folding. Proposed to act as a co-chaperone in HSP90 complexes such as in unligated steroid receptors heterocomplexes. Different co-chaperones seem to compete for association with HSP90 thus establishing distinct HSP90-co-chaperone-receptor complexes with the potential to exert tissue-specific receptor activity control. May have a preference for estrogen receptor complexes and is not found in glucocorticoid receptor complexes. May be involved in cytoplasmic dynein-dependent movement of the receptor from the cytoplasm to the nucleus. May regulate MYB by inhibiting its DNA-binding activity. Involved in regulation of AHR signaling by promoting the formation of the AHR:ARNT dimer; the function is independent of HSP90 but requires the chaperone activity region. Involved in regulation of UV radiation-induced apoptosis. The sequence is that of Peptidyl-prolyl cis-trans isomerase D from Rattus norvegicus (Rat).